The chain runs to 96 residues: ATP synthase subunit c (96 aa).

Helical transmembrane passes span 26 to 46 (GLVLFGAAIGMAIAAAGCGIG) and 68 to 88 (IMVTLILGLAFVESLAIYALV).

It belongs to the ATPase C chain family. In terms of assembly, F-type ATPases have 2 components, F(1) - the catalytic core - and F(0) - the membrane proton channel. F(1) has five subunits: alpha(3), beta(3), gamma(1), delta(1), epsilon(1). F(0) has three main subunits: a(1), b(2) and c(10-14). The alpha and beta chains form an alternating ring which encloses part of the gamma chain. F(1) is attached to F(0) by a central stalk formed by the gamma and epsilon chains, while a peripheral stalk is formed by the delta and b chains.

The protein localises to the cell inner membrane. Its function is as follows. F(1)F(0) ATP synthase produces ATP from ADP in the presence of a proton or sodium gradient. F-type ATPases consist of two structural domains, F(1) containing the extramembraneous catalytic core and F(0) containing the membrane proton channel, linked together by a central stalk and a peripheral stalk. During catalysis, ATP synthesis in the catalytic domain of F(1) is coupled via a rotary mechanism of the central stalk subunits to proton translocation. Functionally, key component of the F(0) channel; it plays a direct role in translocation across the membrane. A homomeric c-ring of between 10-14 subunits forms the central stalk rotor element with the F(1) delta and epsilon subunits. This is ATP synthase subunit c from Oleidesulfovibrio alaskensis (strain ATCC BAA-1058 / DSM 17464 / G20) (Desulfovibrio alaskensis).